An 868-amino-acid polypeptide reads, in one-letter code: Cytosolic phospholipase A2 epsilon (868 aa).

The segment at methionine 1–threonine 46 is disordered. The C2 domain occupies threonine 46–phenylalanine 170. Positions 84, 90, 140, 142, and 148 each coordinate Ca(2+). A PLA2c domain is found at proline 324–valine 856. The active-site Nucleophile is serine 412. Aspartate 700 (proton acceptor) is an active-site residue. At serine 800 the chain carries Phosphoserine. Residues glutamate 857–serine 868 are required for localization at membrane structures.

Requires Ca(2+) as cofactor.

It is found in the cytoplasm. It localises to the cytosol. The protein localises to the early endosome membrane. Its subcellular location is the lysosome membrane. The protein resides in the cell membrane. It carries out the reaction a 1,2-diacyl-sn-glycero-3-phosphoethanolamine + a 1,2-diacyl-sn-glycero-3-phosphocholine = an N-acyl-1,2-diacyl-sn-glycero-3-phosphoethanolamine + a 2-acyl-sn-glycero-3-phosphocholine + H(+). The enzyme catalyses 1-hexadecanoyl-2-octadecanoyl-sn-glycero-3-phosphocholine + 1,2-di-(9Z-octadecenoyl)-sn-glycero-3-phosphoethanolamine = 2-octadecanoyl-sn-glycero-3-phosphocholine + N-hexadecanoyl-1,2-di-(9Z-octadecenoyl)-sn-glycero-3-phosphoethanolamine + H(+). It catalyses the reaction 1-octadecanoyl-2-hexadecanoyl-sn-glycero-3-phosphocholine + 1,2-di-(9Z-octadecenoyl)-sn-glycero-3-phosphoethanolamine = N-octadecanoyl-1,2-di-(9Z-octadecenoyl)-sn-glycero-3-phosphoethanolamine + 2-hexadecanoyl-sn-glycero-3-phosphocholine + H(+). The catalysed reaction is 1,2-di-(9Z-octadecenoyl)-sn-glycero-3-phosphoethanolamine + 1,2-dihexadecanoyl-sn-glycero-3-phosphocholine = N-hexadecanoyl-1,2-di-(9Z-octadecenoyl)-sn-glycero-3-phosphoethanolamine + 2-hexadecanoyl-sn-glycero-3-phosphocholine + H(+). It carries out the reaction 1,2-di-(5Z,8Z,11Z,14Z-eicosatetraenoyl)-sn-glycero-3-phosphocholine + 1,2-di-(9Z-octadecenoyl)-sn-glycero-3-phosphoethanolamine = N-(5Z,8Z,11Z,14Z-eicosatetraenoyl)-1,2-di-(9Z-octadecenoyl)-sn-glycero-3-phosphoethanolamine + 2-(5Z,8Z,11Z,14Z)-eicosatetraenoyl-sn-glycero-3-phosphocholine + H(+). The enzyme catalyses 2 1,2-di-(9Z-octadecenoyl)-sn-glycero-3-phosphoethanolamine = N,1,2-tri-(9Z-octadecenoyl)-sn-glycero-3-phosphoethanolamine + 2-(9Z-octadecenoyl)-sn-glycero-3-phosphoethanolamine + H(+). It catalyses the reaction 1-(1Z-octadecenyl)-2-(9Z-octadecenoyl)-sn-glycero-3-phosphoethanolamine + 1,2-dihexadecanoyl-sn-glycero-3-phosphocholine = 1-O-(1Z-octadecenoyl)-2-(9Z-octadecenoyl)-sn-glycero-3-phospho-N-hexadecanoyl-ethanolamine + 2-hexadecanoyl-sn-glycero-3-phosphocholine + H(+). The catalysed reaction is a 1,2-diacyl-sn-glycero-3-phosphocholine + H2O = a 1-acyl-sn-glycero-3-phosphocholine + a fatty acid + H(+). It carries out the reaction 1-hexadecanoyl-2-(5Z,8Z,11Z,14Z-eicosatetraenoyl)-sn-glycero-3-phosphocholine + H2O = 1-hexadecanoyl-sn-glycero-3-phosphocholine + (5Z,8Z,11Z,14Z)-eicosatetraenoate + H(+). The enzyme catalyses 1-hexadecanoyl-sn-glycero-3-phosphocholine + H2O = sn-glycerol 3-phosphocholine + hexadecanoate + H(+). Stimulated by cytosolic Ca(2+). Stimulated by anionic phospholipids such as phosphatidylserines, phosphatidates and phosphatidylinositols. Its function is as follows. Calcium-dependent N-acyltransferase involved in the biosynthesis of N-acyl ethanolamines (NAEs) in the brain. Transfers the sn-1 fatty acyl chain of phosphatidylcholine (fatty acyl donor) to the amine group of phosphatidylethanolamine (fatty acyl acceptor) to generate N-acyl phosphatidylethanolamine (NAPE). Similarly can use plasmenylethanolamine as a fatty acyl acceptor to form N-acyl plasmenylethanolamine (N-Acyl-PlsEt). Both NAPE and N-Acyl-PlsEt can serve as precursors of bioactive NAEs like N-arachidonoyl phosphatidylethanolamine also called anandamide. Has weak phospholipase A2 and lysophospholipase activities. Regulates intracellular membrane trafficking that requires modulation of membrane curvature as it occurs by enrichment in lysophospholipids. Promotes tubule formation involved in clathrin-independent endocytotic trafficking and cargo recycling. The polypeptide is Cytosolic phospholipase A2 epsilon (Homo sapiens (Human)).